A 253-amino-acid chain; its full sequence is Probable transcriptional regulatory protein Tlet_1011 (253 aa).

The protein belongs to the TACO1 family.

It is found in the cytoplasm. The chain is Probable transcriptional regulatory protein Tlet_1011 from Pseudothermotoga lettingae (strain ATCC BAA-301 / DSM 14385 / NBRC 107922 / TMO) (Thermotoga lettingae).